We begin with the raw amino-acid sequence, 1385 residues long: Formin-like protein 7 (1385 aa).

The region spanning 9–193 (FKKPPDGLLL…RYVSMRNVVP (185 aa)) is the Phosphatase tensin-type domain. Cys-126 acts as the Phosphocysteine intermediate in catalysis. Residues 199–358 (DRALTLDSVI…KASSTSQGNI (160 aa)) form the C2 tensin-type domain. Disordered stretches follow at residues 345-367 (IPQR…DGSE), 427-510 (APSR…LTVN), 649-989 (STAA…PLHW), and 1362-1385 (KRAQ…LLEP). Composition is skewed to polar residues over residues 349–358 (KASSTSQGNI), 448–470 (TSAS…SPVQ), and 483–510 (PAQS…LTVN). Pro residues-rich tracts occupy residues 654 to 665 (PPLPPPLPPPLK) and 689 to 701 (TQPP…PPIQ). Low complexity predominate over residues 702-718 (PTLISNSIYSSTSSVVS). 3 stretches are compositionally biased toward pro residues: residues 727–758 (PAPP…PPSA), 766–795 (PVPP…PPAA), and 802–815 (AVPP…PPMV). A compositionally biased stretch (low complexity) spans 855–867 (QTSSLVSSLPSSR). 2 stretches are compositionally biased toward pro residues: residues 895-906 (SAPPAPPLPPPK) and 921-932 (WPPPPPPGPPPK). Over residues 933-942 (NSSNSLPSKG) the composition is skewed to low complexity. The region spanning 974-1372 (RPNQSSKRTP…RAQMEAEKEK (399 aa)) is the FH2 domain.

The protein belongs to the formin-like family. Class-II subfamily.

This Oryza sativa subsp. japonica (Rice) protein is Formin-like protein 7 (FH7).